The sequence spans 288 residues: Eukaryotic translation initiation factor 3 subunit G (288 aa).

The disordered stretch occupies residues 1–35 (MSRVANNRDWADDEDLEDSNELPQSTTTTNKDGTQ). Residues 11 to 20 (ADDEDLEDSN) show a composition bias toward acidic residues. Residues 21-35 (ELPQSTTTTNKDGTQ) are compositionally biased toward polar residues. Residues 208 to 286 (ATLRVTNVSE…LILRVEFAKK (79 aa)) form the RRM domain.

The protein belongs to the eIF-3 subunit G family. Component of the eukaryotic translation initiation factor 3 (eIF-3) complex.

The protein localises to the cytoplasm. Its function is as follows. RNA-binding component of the eukaryotic translation initiation factor 3 (eIF-3) complex, which is involved in protein synthesis of a specialized repertoire of mRNAs and, together with other initiation factors, stimulates binding of mRNA and methionyl-tRNAi to the 40S ribosome. The eIF-3 complex specifically targets and initiates translation of a subset of mRNAs involved in cell proliferation. This subunit can bind 18S rRNA. The sequence is that of Eukaryotic translation initiation factor 3 subunit G (tif35) from Botryotinia fuckeliana (strain B05.10) (Noble rot fungus).